We begin with the raw amino-acid sequence, 68 residues long: Large ribosomal subunit protein bL31 (68 aa).

Zn(2+) is bound by residues Cys-16, Cys-18, Cys-36, and Cys-39.

Belongs to the bacterial ribosomal protein bL31 family. Type A subfamily. As to quaternary structure, part of the 50S ribosomal subunit. Requires Zn(2+) as cofactor.

In terms of biological role, binds the 23S rRNA. In Lachnospira eligens (strain ATCC 27750 / DSM 3376 / VPI C15-48 / C15-B4) (Eubacterium eligens), this protein is Large ribosomal subunit protein bL31.